A 355-amino-acid polypeptide reads, in one-letter code: Tetraacyldisaccharide 4'-kinase (355 aa).

Residue 49–56 (TAGGTGKT) participates in ATP binding.

The protein belongs to the LpxK family.

It carries out the reaction a lipid A disaccharide + ATP = a lipid IVA + ADP + H(+). It functions in the pathway glycolipid biosynthesis; lipid IV(A) biosynthesis; lipid IV(A) from (3R)-3-hydroxytetradecanoyl-[acyl-carrier-protein] and UDP-N-acetyl-alpha-D-glucosamine: step 6/6. Functionally, transfers the gamma-phosphate of ATP to the 4'-position of a tetraacyldisaccharide 1-phosphate intermediate (termed DS-1-P) to form tetraacyldisaccharide 1,4'-bis-phosphate (lipid IVA). This is Tetraacyldisaccharide 4'-kinase from Chlorobium luteolum (strain DSM 273 / BCRC 81028 / 2530) (Pelodictyon luteolum).